The following is a 212-amino-acid chain: Phosphatidylserine decarboxylase proenzyme (212 aa).

Ser-182 serves as the catalytic Schiff-base intermediate with substrate; via pyruvic acid. At Ser-182 the chain carries Pyruvic acid (Ser); by autocatalysis.

This sequence belongs to the phosphatidylserine decarboxylase family. PSD-A subfamily. In terms of assembly, heterodimer of a large membrane-associated beta subunit and a small pyruvoyl-containing alpha subunit. It depends on pyruvate as a cofactor. Post-translationally, is synthesized initially as an inactive proenzyme. Formation of the active enzyme involves a self-maturation process in which the active site pyruvoyl group is generated from an internal serine residue via an autocatalytic post-translational modification. Two non-identical subunits are generated from the proenzyme in this reaction, and the pyruvate is formed at the N-terminus of the alpha chain, which is derived from the carboxyl end of the proenzyme. The post-translation cleavage follows an unusual pathway, termed non-hydrolytic serinolysis, in which the side chain hydroxyl group of the serine supplies its oxygen atom to form the C-terminus of the beta chain, while the remainder of the serine residue undergoes an oxidative deamination to produce ammonia and the pyruvoyl prosthetic group on the alpha chain.

It is found in the cell membrane. The catalysed reaction is a 1,2-diacyl-sn-glycero-3-phospho-L-serine + H(+) = a 1,2-diacyl-sn-glycero-3-phosphoethanolamine + CO2. It participates in phospholipid metabolism; phosphatidylethanolamine biosynthesis; phosphatidylethanolamine from CDP-diacylglycerol: step 2/2. Its function is as follows. Catalyzes the formation of phosphatidylethanolamine (PtdEtn) from phosphatidylserine (PtdSer). This chain is Phosphatidylserine decarboxylase proenzyme, found in Chlorobium limicola (strain DSM 245 / NBRC 103803 / 6330).